We begin with the raw amino-acid sequence, 435 residues long: D-amino acid dehydrogenase (435 aa).

3-17 serves as a coordination point for FAD; the sequence is VLILGSGVIGTTSAW.

This sequence belongs to the DadA oxidoreductase family. FAD is required as a cofactor.

It catalyses the reaction a D-alpha-amino acid + A + H2O = a 2-oxocarboxylate + AH2 + NH4(+). Its pathway is amino-acid degradation; D-alanine degradation; NH(3) and pyruvate from D-alanine: step 1/1. Functionally, oxidative deamination of D-amino acids. This chain is D-amino acid dehydrogenase, found in Xylella fastidiosa (strain 9a5c).